Reading from the N-terminus, the 261-residue chain is UPF0246 protein Vapar_1301 (261 aa).

The protein belongs to the UPF0246 family.

The sequence is that of UPF0246 protein Vapar_1301 from Variovorax paradoxus (strain S110).